The chain runs to 111 residues: uncharacterized protein (111 aa).

It belongs to the SUI1 family.

This is an uncharacterized protein from Synechocystis sp. (strain ATCC 27184 / PCC 6803 / Kazusa).